The chain runs to 180 residues: ATP synthase subunit b (180 aa).

Residues 15-35 traverse the membrane as a helical segment; that stretch reads LIPEVPELVIGLLAFAIVFFV.

It belongs to the ATPase B chain family. F-type ATPases have 2 components, F(1) - the catalytic core - and F(0) - the membrane proton channel. F(1) has five subunits: alpha(3), beta(3), gamma(1), delta(1), epsilon(1). F(0) has three main subunits: a(1), b(2) and c(10-14). The alpha and beta chains form an alternating ring which encloses part of the gamma chain. F(1) is attached to F(0) by a central stalk formed by the gamma and epsilon chains, while a peripheral stalk is formed by the delta and b chains.

The protein localises to the cell membrane. In terms of biological role, f(1)F(0) ATP synthase produces ATP from ADP in the presence of a proton or sodium gradient. F-type ATPases consist of two structural domains, F(1) containing the extramembraneous catalytic core and F(0) containing the membrane proton channel, linked together by a central stalk and a peripheral stalk. During catalysis, ATP synthesis in the catalytic domain of F(1) is coupled via a rotary mechanism of the central stalk subunits to proton translocation. Component of the F(0) channel, it forms part of the peripheral stalk, linking F(1) to F(0). The protein is ATP synthase subunit b of Streptomyces avermitilis (strain ATCC 31267 / DSM 46492 / JCM 5070 / NBRC 14893 / NCIMB 12804 / NRRL 8165 / MA-4680).